The following is a 297-amino-acid chain: Myozenin-1 (297 aa).

The disordered stretch occupies residues 1–34; it reads MPLSGTPAPNKKRKSSKLIMELTGGGQESSGLNL. Serine 82 is modified (phosphoserine). The tract at residues 105–172 is disordered; the sequence is FSYSKSSGGG…ALPDNQAGGE (68 aa). The span at 118 to 128 shows a compositional bias: low complexity; the sequence is RSGSAGQYGSD. Positions 136–162 are enriched in gly residues; it reads SGSGSGSGSGPGSGGAGGPGGHSGRGG.

The protein belongs to the myozenin family. Interacts with ACTN2, ACTN3, FLNA, FLNB, FLNC, LDB3, PPP3CA and TCAP. Interacts via its C-terminal region with MYOT.

It localises to the nucleus. The protein resides in the cell projection. It is found in the pseudopodium. Functionally, myozenins may serve as intracellular binding proteins involved in linking Z-disk proteins such as alpha-actinin, gamma-filamin, TCAP/telethonin, LDB3/ZASP and localizing calcineurin signaling to the sarcomere. Plays an important role in the modulation of calcineurin signaling. May play a role in myofibrillogenesis. The sequence is that of Myozenin-1 (MYOZ1) from Bos taurus (Bovine).